A 512-amino-acid chain; its full sequence is Peroxisomal N(1)-acetyl-spermine/spermidine oxidase (512 aa).

Met-1 carries the N-acetylmethionine modification. The propeptide occupies 1-6 (MQSGGR). Residues Ala-25, Glu-46, Arg-54, and 70-71 (HW) contribute to the FAD site. The substrate site is built by His-73 and Val-195. Val-248 lines the FAD pocket. Substrate is bound at residue Asn-321. FAD contacts are provided by residues Glu-473 and 482-483 (TT). Residues 510-512 (PRL) carry the Microbody targeting signal motif.

The protein belongs to the flavin monoamine oxidase family. As to quaternary structure, monomer. Requires FAD as cofactor.

The protein resides in the peroxisome. It localises to the cytoplasm. It catalyses the reaction N(1)-acetylspermine + O2 + H2O = 3-acetamidopropanal + spermidine + H2O2. It carries out the reaction N(1)-acetylspermidine + O2 + H2O = 3-acetamidopropanal + putrescine + H2O2. The enzyme catalyses N(1),N(12)-diacetylspermine + O2 + H2O = 3-acetamidopropanal + N(1)-acetylspermidine + H2O2. Its pathway is amine and polyamine metabolism; spermine metabolism. Flavoenzyme which catalyzes the oxidation of N(1)-acetylspermine to spermidine and is thus involved in the polyamine back-conversion. Can also oxidize N(1)-acetylspermidine to putrescine. Substrate specificity: N(1)-acetylspermine = N(1)-acetylspermidine &gt; N(1),N(12)-diacylspermine &gt;&gt; spermine. Does not oxidize spermidine. Plays an important role in the regulation of polyamine intracellular concentration. This Bos taurus (Bovine) protein is Peroxisomal N(1)-acetyl-spermine/spermidine oxidase (PAOX).